Here is a 468-residue protein sequence, read N- to C-terminus: Citrate synthase, mitochondrial (468 aa).

The N-terminal 30 residues, 1–30, are a transit peptide targeting the mitochondrion; the sequence is MSLITAGRLCARILGAKNSPCALIAARQAS. Active-site residues include His303 and His349. Arg358 provides a ligand contact to oxaloacetate. Asp404 is a catalytic residue. 2 residues coordinate oxaloacetate: Arg430 and Arg450.

The protein belongs to the citrate synthase family. As to quaternary structure, homodimer.

The protein localises to the mitochondrion matrix. The catalysed reaction is oxaloacetate + acetyl-CoA + H2O = citrate + CoA + H(+). It participates in carbohydrate metabolism; tricarboxylic acid cycle; isocitrate from oxaloacetate: step 1/2. Functionally, key enzyme of the Krebs tricarboxylic acid cycle which catalyzes the synthesis of citrate from acetyl coenzyme A and oxaloacetate. In Xenopus tropicalis (Western clawed frog), this protein is Citrate synthase, mitochondrial (cs).